The primary structure comprises 324 residues: Thiazole synthase (324 aa).

Lys-167 serves as the catalytic Schiff-base intermediate with DXP. 1-deoxy-D-xylulose 5-phosphate is bound by residues Gly-228, 254–255 (AG), and 276–277 (NT).

Belongs to the ThiG family. As to quaternary structure, homotetramer. Forms heterodimers with either ThiH or ThiS.

Its subcellular location is the cytoplasm. The enzyme catalyses [ThiS sulfur-carrier protein]-C-terminal-Gly-aminoethanethioate + 2-iminoacetate + 1-deoxy-D-xylulose 5-phosphate = [ThiS sulfur-carrier protein]-C-terminal Gly-Gly + 2-[(2R,5Z)-2-carboxy-4-methylthiazol-5(2H)-ylidene]ethyl phosphate + 2 H2O + H(+). The protein operates within cofactor biosynthesis; thiamine diphosphate biosynthesis. Catalyzes the rearrangement of 1-deoxy-D-xylulose 5-phosphate (DXP) to produce the thiazole phosphate moiety of thiamine. Sulfur is provided by the thiocarboxylate moiety of the carrier protein ThiS. In vitro, sulfur can be provided by H(2)S. This is Thiazole synthase from Paramagnetospirillum magneticum (strain ATCC 700264 / AMB-1) (Magnetospirillum magneticum).